The primary structure comprises 236 residues: Auxin-responsive protein IAA13 (236 aa).

3 disordered regions span residues 1-24, 52-93, and 105-130; these read MAGA…GGAA, EAAA…WPPV, and SVKS…GSNS. The EAR-like (transcriptional repression) motif lies at 12–16; sequence LRLGL. Positions 52-61 are enriched in low complexity; it reads EAAAGKAEAP. Over residues 62–81 the composition is skewed to basic and acidic residues; the sequence is AAEKAKRPAEAAAADAEKPP. Positions 117-130 are enriched in low complexity; sequence QQQQPAANASGSNS. A PB1 domain is found at 131–218; sequence SAFVKVSMDG…SCKRLRIMKG (88 aa).

This sequence belongs to the Aux/IAA family. Homodimers and heterodimers.

It localises to the nucleus. Its function is as follows. Aux/IAA proteins are short-lived transcriptional factors that function as repressors of early auxin response genes at low auxin concentrations. This chain is Auxin-responsive protein IAA13 (IAA13), found in Oryza sativa subsp. japonica (Rice).